Here is a 464-residue protein sequence, read N- to C-terminus: Arginine biosynthesis bifunctional protein ArgJ, chloroplastic (464 aa).

Residues Thr-208, Lys-234, Thr-245, Glu-332, Asn-459, and Thr-464 each contribute to the substrate site. Residue Thr-245 is the Nucleophile of the active site.

This sequence belongs to the ArgJ family. Heterodimer of an alpha and a beta chain.

It is found in the plastid. Its subcellular location is the chloroplast. The enzyme catalyses N(2)-acetyl-L-ornithine + L-glutamate = N-acetyl-L-glutamate + L-ornithine. It carries out the reaction L-glutamate + acetyl-CoA = N-acetyl-L-glutamate + CoA + H(+). It participates in amino-acid biosynthesis; L-arginine biosynthesis; L-ornithine and N-acetyl-L-glutamate from L-glutamate and N(2)-acetyl-L-ornithine (cyclic): step 1/1. It functions in the pathway amino-acid biosynthesis; L-arginine biosynthesis; N(2)-acetyl-L-ornithine from L-glutamate: step 1/4. Catalyzes two activities which are involved in the cyclic version of arginine biosynthesis: the synthesis of acetylglutamate from glutamate and acetyl-CoA, and of ornithine by transacetylation between acetylornithine and glutamate. The chain is Arginine biosynthesis bifunctional protein ArgJ, chloroplastic from Sorghum bicolor (Sorghum).